Reading from the N-terminus, the 207-residue chain is Thiamine-phosphate synthase (207 aa).

4-amino-2-methyl-5-(diphosphooxymethyl)pyrimidine contacts are provided by residues 36–40 (QLRMK) and Asn-68. The Mg(2+) site is built by Asp-69 and Asp-88. Ser-106 serves as a coordination point for 4-amino-2-methyl-5-(diphosphooxymethyl)pyrimidine. Residue 132–134 (TNT) participates in 2-[(2R,5Z)-2-carboxy-4-methylthiazol-5(2H)-ylidene]ethyl phosphate binding. Lys-135 serves as a coordination point for 4-amino-2-methyl-5-(diphosphooxymethyl)pyrimidine. Residues Gly-162 and 182–183 (VS) contribute to the 2-[(2R,5Z)-2-carboxy-4-methylthiazol-5(2H)-ylidene]ethyl phosphate site.

This sequence belongs to the thiamine-phosphate synthase family. Mg(2+) is required as a cofactor.

The catalysed reaction is 2-[(2R,5Z)-2-carboxy-4-methylthiazol-5(2H)-ylidene]ethyl phosphate + 4-amino-2-methyl-5-(diphosphooxymethyl)pyrimidine + 2 H(+) = thiamine phosphate + CO2 + diphosphate. The enzyme catalyses 2-(2-carboxy-4-methylthiazol-5-yl)ethyl phosphate + 4-amino-2-methyl-5-(diphosphooxymethyl)pyrimidine + 2 H(+) = thiamine phosphate + CO2 + diphosphate. It catalyses the reaction 4-methyl-5-(2-phosphooxyethyl)-thiazole + 4-amino-2-methyl-5-(diphosphooxymethyl)pyrimidine + H(+) = thiamine phosphate + diphosphate. The protein operates within cofactor biosynthesis; thiamine diphosphate biosynthesis; thiamine phosphate from 4-amino-2-methyl-5-diphosphomethylpyrimidine and 4-methyl-5-(2-phosphoethyl)-thiazole: step 1/1. Its function is as follows. Condenses 4-methyl-5-(beta-hydroxyethyl)thiazole monophosphate (THZ-P) and 2-methyl-4-amino-5-hydroxymethyl pyrimidine pyrophosphate (HMP-PP) to form thiamine monophosphate (TMP). The sequence is that of Thiamine-phosphate synthase from Methanococcus maripaludis (strain C7 / ATCC BAA-1331).